Reading from the N-terminus, the 525-residue chain is Peptide chain release factor 3 (525 aa).

In terms of domain architecture, tr-type G spans 9–276 (AKRRTFAIIS…GFTRYAPAPQ (268 aa)). Residues 18 to 25 (SHPDAGKT), 86 to 90 (DTPGH), and 140 to 143 (NKFD) contribute to the GTP site.

It belongs to the TRAFAC class translation factor GTPase superfamily. Classic translation factor GTPase family. PrfC subfamily.

Its subcellular location is the cytoplasm. In terms of biological role, increases the formation of ribosomal termination complexes and stimulates activities of RF-1 and RF-2. It binds guanine nucleotides and has strong preference for UGA stop codons. It may interact directly with the ribosome. The stimulation of RF-1 and RF-2 is significantly reduced by GTP and GDP, but not by GMP. The sequence is that of Peptide chain release factor 3 from Francisella tularensis subsp. holarctica (strain FTNF002-00 / FTA).